We begin with the raw amino-acid sequence, 488 residues long: MTKNNETGWNLDNSYTTLPQSFYTEIPPTPVSSPELVKLNHSLAISLGLTPEELKKEAEIAIFAGNGLPEGAHPLAQAYAGHQFGHFNMLGDGRALLIGEQITPSGERFDIQLKGSGPTPYSRRGDGRAALGPMLREYIISEAMYALDIPTTRSLAVVTTGEPTYRETKLPGAILTRVASSHIRVGTFQYAAARGSIEDLKSLADYTIKRHYPEIESHENRYTALLQEVIKRQASLIAKWQLAGFIHGVMNTDNITISGETIDYGPCAFMDNYDQGTVFSSIDTQGRYAYGNQPYMAAWDLARLAESLIPILHEDEEEALKIAQDEISKFSVQYEKQWFLGMKKKLGLFSNEEQDHSLIEQLLKMMEKYKADYTNTFRSLTLDAIENTALFESPEFKEWYKLWQSRLDRQEQSKENAYEMMKNNNPSIIPRNHRVEEALEAAVTNDDYSVMEKLLEALSNPYAYSTDQEEYCAPPAPTNRPYRTFCGT.

The ATP site is built by Gly91, Gly93, Arg94, Lys114, Asp126, Gly127, Arg177, and Arg184. Asp253 acts as the Proton acceptor in catalysis. Residues Asn254 and Asp263 each coordinate Mg(2+). Asp263 serves as a coordination point for ATP.

It belongs to the SELO family. Mg(2+) is required as a cofactor. The cofactor is Mn(2+).

It catalyses the reaction L-seryl-[protein] + ATP = 3-O-(5'-adenylyl)-L-seryl-[protein] + diphosphate. The enzyme catalyses L-threonyl-[protein] + ATP = 3-O-(5'-adenylyl)-L-threonyl-[protein] + diphosphate. The catalysed reaction is L-tyrosyl-[protein] + ATP = O-(5'-adenylyl)-L-tyrosyl-[protein] + diphosphate. It carries out the reaction L-histidyl-[protein] + UTP = N(tele)-(5'-uridylyl)-L-histidyl-[protein] + diphosphate. It catalyses the reaction L-seryl-[protein] + UTP = O-(5'-uridylyl)-L-seryl-[protein] + diphosphate. The enzyme catalyses L-tyrosyl-[protein] + UTP = O-(5'-uridylyl)-L-tyrosyl-[protein] + diphosphate. Nucleotidyltransferase involved in the post-translational modification of proteins. It can catalyze the addition of adenosine monophosphate (AMP) or uridine monophosphate (UMP) to a protein, resulting in modifications known as AMPylation and UMPylation. This is Protein nucleotidyltransferase YdiU from Bacillus cereus (strain ATCC 14579 / DSM 31 / CCUG 7414 / JCM 2152 / NBRC 15305 / NCIMB 9373 / NCTC 2599 / NRRL B-3711).